The following is a 443-amino-acid chain: Adenylate cyclase (443 aa).

The next 6 helical transmembrane spans lie at 47–69 (VLTITAWLAVVVTGSFALMQLAT), 74–93 (WYIALINVFTAVTFAIVPLL), 98–120 (GLVAPLTFIGTAYVAIFAIGWDV), 124–143 (AGAQFFFLVAAALVVLLVGI), 148–167 (LAVGLAAVAAGLVIALEFLV), and 180–202 (SVSFVLTTVSACGVAVATVWFAL). Residues 203–443 (RDTARAEAVM…RGAEPRTAGV (241 aa)) lie on the Cytoplasmic side of the membrane. The region spanning 251–378 (SVLFADIVGF…DAVNVASRME (128 aa)) is the Guanylate cyclase domain. Residues D256 and D300 each coordinate Mg(2+).

The protein belongs to the adenylyl cyclase class-4/guanylyl cyclase family. As to quaternary structure, homodimer. Can also exist as monomer. Mg(2+) serves as cofactor. Mn(2+) is required as a cofactor.

The protein resides in the cell membrane. The catalysed reaction is ATP = 3',5'-cyclic AMP + diphosphate. In Mycobacterium bovis (strain ATCC BAA-935 / AF2122/97), this protein is Adenylate cyclase (cya).